We begin with the raw amino-acid sequence, 239 residues long: Small ribosomal subunit protein uS3c (239 aa).

The 97-residue stretch at 43–139 (IKNYIQKNRK…RLNISIEKVK (97 aa)) folds into the KH type-2 domain. Residues 50–80 (NRKKSSNRKLESDSSSEVITHNRKNDSGSSS) are disordered.

Belongs to the universal ribosomal protein uS3 family. Part of the 30S ribosomal subunit.

The protein resides in the plastid. It is found in the chloroplast. In Lolium perenne (Perennial ryegrass), this protein is Small ribosomal subunit protein uS3c (rps3).